We begin with the raw amino-acid sequence, 237 residues long: Class B acid phosphatase (237 aa).

Positions 1–25 (MRKVSLALSAACLLFTLNYTASALA) are cleaved as a signal peptide. Asp-69 acts as the Nucleophile in catalysis. Asp-69 and Asp-71 together coordinate Mg(2+). Asp-71 (proton donor) is an active-site residue. Substrate-binding positions include 137–138 (TG) and Lys-177. Residue Asp-192 coordinates Mg(2+).

It belongs to the class B bacterial acid phosphatase family. In terms of assembly, homotetramer. The cofactor is Mg(2+).

It localises to the periplasm. The enzyme catalyses a phosphate monoester + H2O = an alcohol + phosphate. Its function is as follows. Dephosphorylates several organic phosphate monoesters. Also has a phosphotransferase activity catalyzing the transfer of low-energy phosphate groups from organic phosphate monoesters to free hydroxyl groups of various organic compounds. In Citrobacter rodentium (strain ICC168) (Citrobacter freundii biotype 4280), this protein is Class B acid phosphatase.